The sequence spans 688 residues: MPKHQSGSPTDSSDLLLSGKKQRPHLALRRKRRREMRKINRKVPRMNLVPIKEKTAWQHLQALISEAEEVLKTSQTPQTSLTLFLALLSVLGPPPVTGESYWAYLPKPPILHPVGWGSTDPIRVLTNQTMYLGGSPDFHGFRNMSGNVHFEGKSDTLPICLSFSFSTPTGCFQVDKQVFLSDTPTVDNNKPGGKGDKRRMWELWLTTLGNSGANTKLVPIKKKLPPKYPHCQIAFKKDAFWEGDESAPPRWLPCAFPDQGVSFSPKGALGLLWDFSLPSPSVDQSDQIKSKKNLFGNYTPPVNKEVHRWYEAGWVEPTWFWENSPKDPNDRDFTALVPHTELFRLVAASRHLILKRPGFQEHEMIPTSACVTYPYAILLGLPQLIDIEKRGSTFHISCSSCRLTNCLDSSAYDYAAIIVKRPPYVLLPVDIGDEPWFDDSAIQTFRYATDLIRAKRFVAAIILGISALIAIITSFAVATTALVKEMQTATFVNNLHRNVTLALSEQRIIDLKLEARLNALEEVVLELGQDVANLKTRMSTRCHANYDFICVTPLPYNATENWERTRAHLLGIWNDNEISYNIQELTNLISDMSKQHIDAVDLSGLAQSFANGVKALNPLDWTQYFIFIGVGALLLVIVLMIFPIVFQCLAKSLDQVQSDLNVLLLKKKKGGNAAPAAEMVELPRVSYT.

Polar residues predominate over residues M1 to L15. Residues M1–R37 form a disordered region. An N-terminal signal peptide occupies residues M1–G98. A compositionally biased stretch (basic residues) spans K20–R37. Topologically, residues E99–Y624 are extracellular. N127 and N143 each carry an N-linked (GlcNAc...) asparagine; by host glycan. Positions L426 to S474 form a coiled coil. The propeptide occupies K455–R456. Residues F457–V477 form a fusion peptide region. The tract at residues L463 to A481 is immunosuppression. An N-linked (GlcNAc...) asparagine; by host glycan is attached at N498. A coiled-coil region spans residues L511–R541. N-linked (GlcNAc...) asparagine; by host glycosylation occurs at N557. Residues F625–V645 traverse the membrane as a helical segment. Over F646–T688 the chain is Cytoplasmic.

In terms of assembly, the mature envelope protein (Env) consists of a trimer of SU-TM heterodimers attached by noncovalent interactions or by a labile interchain disulfide bond. Specific enzymatic cleavages in vivo yield mature proteins. Envelope glycoproteins are synthesized as an inactive precursor that is N-glycosylated and processed likely by host cell furin or by a furin-like protease in the Golgi to yield the mature SU and TM proteins. The cleavage site between SU and TM requires the minimal sequence [KR]-X-[KR]-R.

Its subcellular location is the virion membrane. It is found in the host cell membrane. In terms of biological role, the surface protein (SU) attaches the virus to the host cell by binding to its receptor. This interaction triggers the refolding of the transmembrane protein (TM) and is thought to activate its fusogenic potential by unmasking its fusion peptide. Fusion occurs at the host cell plasma membrane. Its function is as follows. The transmembrane protein (TM) acts as a class I viral fusion protein. Under the current model, the protein has at least 3 conformational states: pre-fusion native state, pre-hairpin intermediate state, and post-fusion hairpin state. During viral and target cell membrane fusion, the coiled coil regions (heptad repeats) assume a trimer-of-hairpins structure, positioning the fusion peptide in close proximity to the C-terminal region of the ectodomain. The formation of this structure appears to drive apposition and subsequent fusion of viral and target cell membranes. Membranes fusion leads to delivery of the nucleocapsid into the cytoplasm. The chain is Envelope glycoprotein gp70 (env) from Mouse mammary tumor virus (strain BR6) (MMTV).